The chain runs to 230 residues: ATP-dependent dethiobiotin synthetase BioD (230 aa).

12–17 (DIGKTH) provides a ligand contact to ATP. Mg(2+) is bound at residue T16. The active site involves K37. S41 lines the substrate pocket. ATP-binding positions include D52, 115–118 (EGAG), and 175–176 (SE). Positions 52 and 115 each coordinate Mg(2+).

Belongs to the dethiobiotin synthetase family. In terms of assembly, homodimer. Requires Mg(2+) as cofactor.

Its subcellular location is the cytoplasm. It catalyses the reaction (7R,8S)-7,8-diammoniononanoate + CO2 + ATP = (4R,5S)-dethiobiotin + ADP + phosphate + 3 H(+). Its pathway is cofactor biosynthesis; biotin biosynthesis; biotin from 7,8-diaminononanoate: step 1/2. Functionally, catalyzes a mechanistically unusual reaction, the ATP-dependent insertion of CO2 between the N7 and N8 nitrogen atoms of 7,8-diaminopelargonic acid (DAPA, also called 7,8-diammoniononanoate) to form a ureido ring. The protein is ATP-dependent dethiobiotin synthetase BioD of Caulobacter sp. (strain K31).